We begin with the raw amino-acid sequence, 464 residues long: ATP-dependent protease ATPase subunit HslU (464 aa).

Residues I19, 61–66, D277, E342, and R414 each bind ATP; that span reads GVGKTE.

The protein belongs to the ClpX chaperone family. HslU subfamily. A double ring-shaped homohexamer of HslV is capped on each side by a ring-shaped HslU homohexamer. The assembly of the HslU/HslV complex is dependent on binding of ATP.

It is found in the cytoplasm. Its function is as follows. ATPase subunit of a proteasome-like degradation complex; this subunit has chaperone activity. The binding of ATP and its subsequent hydrolysis by HslU are essential for unfolding of protein substrates subsequently hydrolyzed by HslV. HslU recognizes the N-terminal part of its protein substrates and unfolds these before they are guided to HslV for hydrolysis. The polypeptide is ATP-dependent protease ATPase subunit HslU (Lactobacillus johnsonii (strain CNCM I-12250 / La1 / NCC 533)).